An 85-amino-acid chain; its full sequence is MAHKKAGGSTRNGRDSESKRLGVKLFGGQAVKAGNILVRQRGTKFHAGYGVGLGKDHTLFAKVDGVVKFETKGAFGRKYVSIVAA.

Belongs to the bacterial ribosomal protein bL27 family.

This chain is Large ribosomal subunit protein bL27, found in Pseudomonas aeruginosa (strain LESB58).